Reading from the N-terminus, the 45-residue chain is Conotoxin reg3.12 (45 aa).

Residues 1–31 (DQPVERHAGNKRHLNPTIRRAMIIDANRREK) constitute a propeptide that is removed on maturation. 3 disulfide bridges follow: Cys-32-Cys-44, Cys-33-Cys-42, and Cys-38-Cys-45.

It belongs to the conotoxin M superfamily. As to expression, expressed by the venom duct.

Its subcellular location is the secreted. This Conus regius (Crown cone) protein is Conotoxin reg3.12.